Here is a 195-residue protein sequence, read N- to C-terminus: ATP-dependent Clp protease proteolytic subunit (195 aa).

Residue serine 98 is the Nucleophile of the active site. Histidine 123 is a catalytic residue.

This sequence belongs to the peptidase S14 family. As to quaternary structure, fourteen ClpP subunits assemble into 2 heptameric rings which stack back to back to give a disk-like structure with a central cavity, resembling the structure of eukaryotic proteasomes.

The protein resides in the cytoplasm. It catalyses the reaction Hydrolysis of proteins to small peptides in the presence of ATP and magnesium. alpha-casein is the usual test substrate. In the absence of ATP, only oligopeptides shorter than five residues are hydrolyzed (such as succinyl-Leu-Tyr-|-NHMec, and Leu-Tyr-Leu-|-Tyr-Trp, in which cleavage of the -Tyr-|-Leu- and -Tyr-|-Trp bonds also occurs).. Cleaves peptides in various proteins in a process that requires ATP hydrolysis. Has a chymotrypsin-like activity. Plays a major role in the degradation of misfolded proteins. In Thermodesulfovibrio yellowstonii (strain ATCC 51303 / DSM 11347 / YP87), this protein is ATP-dependent Clp protease proteolytic subunit.